We begin with the raw amino-acid sequence, 495 residues long: Tripartite motif-containing protein 5 (495 aa).

Residue A2 is modified to N-acetylalanine. The RING-type zinc-finger motif lies at 15–60 (CPICLELLTEPLSLHCGHSFCQACITANHKKSMLYKEGERSCPVCR). The residue at position 87 (S87) is a Phosphoserine. Residues 92-133 (QKVDHCARHGEKLLLFCQEDSKVICWLCERSQEHRGHHTFLM) form a B box-type zinc finger. Zn(2+)-binding residues include C97, H100, C119, and H125. Positions 137-223 (AQEYHVKLQT…KSLTKSETKM (87 aa)) form a coiled coil. The tract at residues 187–200 (FEQLREILDREESN) is required for interaction with GABARAP and for autophagy. The 213-residue stretch at 283 to 495 (LKGMLDMFRE…VPMTLCSPSS (213 aa)) folds into the B30.2/SPRY domain.

This sequence belongs to the TRIM/RBCC family. As to quaternary structure, can form homodimers and homotrimers. In addition to lower-order dimerization, also exhibits a higher-order multimerization and both low- and high-order multimerizations are essential for its restriction activity. Interacts with BTBD1 and BTBD2. Interacts with PSMC4, PSMC5, PSMD7 and HSPA8/HSC70. Interacts (via B30.2/SPRY domain) with HSPA1A/B. Interacts with PSMC2, MAP3K7/TAK1, TAB2 and TAB3. Interacts with SQSTM1. Interacts with TRIM6 and TRIM34. Interacts with ULK1 (phosphorylated form), GABARAP, GABARAPL1, GABARAPL2, MAP1LC3A, MAP1LC3C and BECN1. Degraded in a proteasome-independent fashion in the absence of viral infection but in a proteasome-dependent fashion following exposure to restriction sensitive virus. In terms of processing, autoubiquitinated in a RING finger- and UBE2D2-dependent manner. Monoubiquitinated by TRIM21. Deubiquitinated by Yersinia YopJ. Ubiquitination may not lead to proteasomal degradation.

Its subcellular location is the cytoplasm. The protein resides in the nucleus. The catalysed reaction is S-ubiquitinyl-[E2 ubiquitin-conjugating enzyme]-L-cysteine + [acceptor protein]-L-lysine = [E2 ubiquitin-conjugating enzyme]-L-cysteine + N(6)-ubiquitinyl-[acceptor protein]-L-lysine.. It participates in protein modification; protein ubiquitination. Its function is as follows. Capsid-specific restriction factor that prevents infection from non-host-adapted retroviruses. Blocks viral replication early in the life cycle, after viral entry but before reverse transcription. In addition to acting as a capsid-specific restriction factor, also acts as a pattern recognition receptor that activates innate immune signaling in response to the retroviral capsid lattice. Binding to the viral capsid triggers its E3 ubiquitin ligase activity, and in concert with the heterodimeric ubiquitin conjugating enzyme complex UBE2V1-UBE2N (also known as UBC13-UEV1A complex) generates 'Lys-63'-linked polyubiquitin chains, which in turn are catalysts in the autophosphorylation of the MAP3K7/TAK1 complex (includes TAK1, TAB2, and TAB3). Activation of the MAP3K7/TAK1 complex by autophosphorylation results in the induction and expression of NF-kappa-B and MAPK-responsive inflammatory genes, thereby leading to an innate immune response in the infected cell. Plays a role in regulating autophagy through activation of autophagy regulator BECN1 by causing its dissociation from its inhibitors BCL2 and TAB2. The protein is Tripartite motif-containing protein 5 (TRIM5) of Macaca nemestrina (Pig-tailed macaque).